The sequence spans 78 residues: Large ribosomal subunit protein uL29 (78 aa).

This sequence belongs to the universal ribosomal protein uL29 family.

This Rhodococcus erythropolis (strain PR4 / NBRC 100887) protein is Large ribosomal subunit protein uL29.